Here is a 439-residue protein sequence, read N- to C-terminus: Structure-specific endonuclease subunit SLX1 homolog (439 aa).

2 disordered regions span residues Met-1–Lys-28 and Asp-117–Leu-140. A compositionally biased stretch (basic and acidic residues) spans Glu-125–Asn-136. The region spanning Glu-166 to Lys-253 is the GIY-YIG domain. The segment at Cys-335–Cys-390 adopts an SLX1-type zinc-finger fold.

It belongs to the SLX1 family. As to quaternary structure, forms a heterodimer with him-18/slx-4. It depends on a divalent metal cation as a cofactor.

The protein localises to the nucleus. In terms of biological role, catalytic subunit of a heterodimeric structure-specific endonuclease that resolves DNA secondary structures generated during DNA repair and recombination. Has endonuclease activity towards branched DNA substrates, introducing single-strand cuts in duplex DNA close to junctions with ss-DNA (Potential). Has a preference for replication forks over 5' flap structures or Holliday junctions and shows much lower activity toward 3' flap structures. Required for proper crossover distribution through inhibition of crossover formation at the central region of chromosomes. The sequence is that of Structure-specific endonuclease subunit SLX1 homolog from Caenorhabditis briggsae.